Reading from the N-terminus, the 564-residue chain is Kelch-like protein 12 (564 aa).

The 68-residue stretch at 29–96 (CDITLRVEGT…VYTETVLVTV (68 aa)) folds into the BTB domain. In terms of domain architecture, BACK spans 131–232 (CLGIRDFAET…LTPRYITDVI (102 aa)). Kelch repeat units follow at residues 278–325 (VLLV…ALND), 327–375 (VYVI…TLGD), 376–422 (MIYV…VASG), 423–469 (LIYC…LLND), 471–516 (IYVV…VLRG), and 518–563 (LYAI…VLRE).

In terms of assembly, component of the BCR(KLHL12) E3 ubiquitin ligase complex.

The protein resides in the cytoplasmic vesicle. It is found in the COPII-coated vesicle. It functions in the pathway protein modification; protein ubiquitination. Substrate-specific adapter of a BCR (BTB-CUL3-RBX1) E3 ubiquitin ligase complex that acts as a negative regulator of Wnt signaling pathway and ER-Golgi transport. The BCR(KLHL12) complex is involved in ER-Golgi transport by regulating the size of COPII coats, thereby playing a key role in collagen export, which is required for embryonic stem (ES) cells division. Negatively regulates the Wnt signaling pathway, possibly via the targeted ubiquitination and subsequent proteolysis of dvl2 and dvl3. Regulates convergent-extension movements during early embryonic development. The sequence is that of Kelch-like protein 12 (klhl12) from Danio rerio (Zebrafish).